The following is a 142-amino-acid chain: Clock-controlled protein 6 (142 aa).

Belongs to the SED1 family.

The chain is Clock-controlled protein 6 (ccg-6) from Neurospora crassa (strain ATCC 24698 / 74-OR23-1A / CBS 708.71 / DSM 1257 / FGSC 987).